Here is a 278-residue protein sequence, read N- to C-terminus: 4-hydroxy-3-methylbut-2-enyl diphosphate reductase (278 aa).

Cys-12 is a [4Fe-4S] cluster binding site. (2E)-4-hydroxy-3-methylbut-2-enyl diphosphate contacts are provided by His-41 and His-74. His-41 and His-74 together coordinate dimethylallyl diphosphate. Isopentenyl diphosphate-binding residues include His-41 and His-74. [4Fe-4S] cluster is bound at residue Cys-96. Residue His-124 participates in (2E)-4-hydroxy-3-methylbut-2-enyl diphosphate binding. His-124 contributes to the dimethylallyl diphosphate binding site. Residue His-124 participates in isopentenyl diphosphate binding. The active-site Proton donor is Glu-126. Thr-161 provides a ligand contact to (2E)-4-hydroxy-3-methylbut-2-enyl diphosphate. Cys-189 provides a ligand contact to [4Fe-4S] cluster. (2E)-4-hydroxy-3-methylbut-2-enyl diphosphate is bound by residues Ser-217, Asn-219, and Ser-261. Residues Ser-217, Asn-219, and Ser-261 each coordinate dimethylallyl diphosphate. Residues Ser-217, Asn-219, and Ser-261 each coordinate isopentenyl diphosphate.

The protein belongs to the IspH family. [4Fe-4S] cluster serves as cofactor.

The catalysed reaction is isopentenyl diphosphate + 2 oxidized [2Fe-2S]-[ferredoxin] + H2O = (2E)-4-hydroxy-3-methylbut-2-enyl diphosphate + 2 reduced [2Fe-2S]-[ferredoxin] + 2 H(+). It catalyses the reaction dimethylallyl diphosphate + 2 oxidized [2Fe-2S]-[ferredoxin] + H2O = (2E)-4-hydroxy-3-methylbut-2-enyl diphosphate + 2 reduced [2Fe-2S]-[ferredoxin] + 2 H(+). The protein operates within isoprenoid biosynthesis; dimethylallyl diphosphate biosynthesis; dimethylallyl diphosphate from (2E)-4-hydroxy-3-methylbutenyl diphosphate: step 1/1. It functions in the pathway isoprenoid biosynthesis; isopentenyl diphosphate biosynthesis via DXP pathway; isopentenyl diphosphate from 1-deoxy-D-xylulose 5-phosphate: step 6/6. Its function is as follows. Catalyzes the conversion of 1-hydroxy-2-methyl-2-(E)-butenyl 4-diphosphate (HMBPP) into a mixture of isopentenyl diphosphate (IPP) and dimethylallyl diphosphate (DMAPP). Acts in the terminal step of the DOXP/MEP pathway for isoprenoid precursor biosynthesis. The polypeptide is 4-hydroxy-3-methylbut-2-enyl diphosphate reductase (Anaeromyxobacter sp. (strain K)).